The sequence spans 182 residues: uncharacterized protein (182 aa).

Positions 66–133 (QKRKRREIKV…NLEIETNSDS (68 aa)) form a coiled coil.

This is an uncharacterized protein from Acanthamoeba polyphaga (Amoeba).